The chain runs to 256 residues: Ribosomal RNA large subunit methyltransferase E (256 aa).

S-adenosyl-L-methionine contacts are provided by G48, W50, D68, D86, and D111. Catalysis depends on K151, which acts as the Proton acceptor. The TRAM domain maps to 198–256 (PVSPGDELDATVVDIGSEGDGIIKIDGYTLFVPGVENGDSVRVRVTDLKSNVGFAEVIE).

Belongs to the class I-like SAM-binding methyltransferase superfamily. RNA methyltransferase RlmE family.

Its subcellular location is the cytoplasm. It carries out the reaction uridine(2552) in 23S rRNA + S-adenosyl-L-methionine = 2'-O-methyluridine(2552) in 23S rRNA + S-adenosyl-L-homocysteine + H(+). Specifically methylates the uridine in position 2552 of 23S rRNA at the 2'-O position of the ribose in the fully assembled 50S ribosomal subunit. The protein is Ribosomal RNA large subunit methyltransferase E of Haloquadratum walsbyi (strain DSM 16790 / HBSQ001).